Here is a 74-residue protein sequence, read N- to C-terminus: uncharacterized protein (74 aa).

Helical transmembrane passes span 3–23 and 35–55; these read YSAL…CFSF and ILFF…MLLT.

Its subcellular location is the cell membrane. This is an uncharacterized protein from Mycoplasma genitalium (strain ATCC 33530 / DSM 19775 / NCTC 10195 / G37) (Mycoplasmoides genitalium).